A 680-amino-acid chain; its full sequence is NADPH--cytochrome P450 reductase (680 aa).

Residues M1–K5 are Lumenal-facing. A helical transmembrane segment spans residues L6–A23. Residues K24–W680 are Cytoplasmic-facing. Residues T60–F204 enclose the Flavodoxin-like domain. FMN contacts are provided by residues S66–A71, A117–G120, L152–N161, and D187. The FAD-binding FR-type domain occupies T264–F509. R283 is a binding site for NADP(+). FAD-binding positions include R439–S442, T457–V459, and G473–T476. Residues T537, S599–R600, K606–Q610, and D642 contribute to the NADP(+) site. Residue W680 participates in FAD binding.

It belongs to the NADPH--cytochrome P450 reductase family. This sequence in the N-terminal section; belongs to the flavodoxin family. In the C-terminal section; belongs to the flavoprotein pyridine nucleotide cytochrome reductase family. FAD serves as cofactor. Requires FMN as cofactor.

The protein localises to the endoplasmic reticulum membrane. It is found in the mitochondrion outer membrane. It localises to the cell membrane. It catalyses the reaction 2 oxidized [cytochrome P450] + NADPH = 2 reduced [cytochrome P450] + NADP(+) + H(+). In terms of biological role, this enzyme is required for electron transfer from NADP to cytochrome P450 in microsomes. It can also provide electron transfer to heme oxygenase and cytochrome B5. Involved in ergosterol biosynthesis. The chain is NADPH--cytochrome P450 reductase from Candida maltosa (Yeast).